The following is a 94-amino-acid chain: DNA-directed RNA polymerase subunit Rpo11 (94 aa).

The protein belongs to the archaeal Rpo11/eukaryotic RPB11/RPC19 RNA polymerase subunit family. As to quaternary structure, part of the RNA polymerase complex.

The protein localises to the cytoplasm. The catalysed reaction is RNA(n) + a ribonucleoside 5'-triphosphate = RNA(n+1) + diphosphate. DNA-dependent RNA polymerase (RNAP) catalyzes the transcription of DNA into RNA using the four ribonucleoside triphosphates as substrates. The chain is DNA-directed RNA polymerase subunit Rpo11 from Haloarcula marismortui (strain ATCC 43049 / DSM 3752 / JCM 8966 / VKM B-1809) (Halobacterium marismortui).